Here is a 79-residue protein sequence, read N- to C-terminus: Small ribosomal subunit protein bS16 (79 aa).

It belongs to the bacterial ribosomal protein bS16 family.

In Oleidesulfovibrio alaskensis (strain ATCC BAA-1058 / DSM 17464 / G20) (Desulfovibrio alaskensis), this protein is Small ribosomal subunit protein bS16.